The sequence spans 1041 residues: Nuclear pore complex protein NUP98A (1041 aa).

The segment covering 1-34 (MFGSSNPFGQSSGTSPFGSQSLFGQTSNTSSNNP) has biased composition (polar residues). Residues 1–44 (MFGSSNPFGQSSGTSPFGSQSLFGQTSNTSSNNPFAPATPFGTS) form a disordered region. A run of 44 repeats spans residues 2-3 (FG), 8-9 (FG), 17-18 (FG), 23-24 (FG), 41-42 (FG), 56-57 (FG), 64-65 (FG), 79-80 (FG), 87-88 (FG), 94-95 (FG), 103-104 (FG), 109-110 (FG), 124-125 (FG), 135-136 (FG), 140-141 (FG), 146-147 (FG), 154-155 (FG), 162-163 (FG), 170-171 (FG), 178-179 (FG), 186-187 (FG), 194-195 (FG), 202-203 (FG), 210-211 (FG), 217-218 (FG), 222-223 (FG), 228-229 (FG), 236-237 (FG), 244-245 (FG), 252-253 (FG), 260-261 (FG), 268-269 (FG), 276-277 (FG), 284-285 (FG), 294-295 (FG), 300-301 (FG), 307-308 (FG), 312-313 (FG), 319-320 (FG), 329-330 (FG), 334-335 (FG), 339-340 (FG), 411-412 (FG), and 427-428 (FG). Residues 2–677 (FGSSNPFGQS…QPVAVTNPFG (676 aa)) form a 65 X 2 AA repeats of F-G region. Residues 98 to 171 (PASSPFGGSS…FGATSTPSFG (74 aa)) form a disordered region. A compositionally biased stretch (polar residues) spans 117-171 (STPQSNPFGNSTQQSQPAFGNTSFGSSTPFGATNTPAFGAPSTPSFGATSTPSFG). Disordered stretches follow at residues 315 to 347 (TPSP…GGSR) and 392 to 447 (QRGD…TNPF). The segment covering 430 to 447 (TSANPTNPFSSSTSTNPF) has biased composition (low complexity). 21 tandem repeats follow at residues 459 to 460 (FG), 466 to 467 (FG), 471 to 472 (FG), 480 to 481 (FG), 491 to 492 (FG), 497 to 498 (FG), 506 to 507 (FG), 514 to 515 (FG), 521 to 522 (FG), 533 to 534 (FG), 555 to 556 (FG), 562 to 563 (FG), 565 to 566 (FG), 573 to 574 (FG), 586 to 587 (FG), 604 to 605 (FG), 627 to 628 (FG), 632 to 633 (FG), 650 to 651 (FG), 655 to 656 (FG), and 676 to 677 (FG). A compositionally biased stretch (low complexity) spans 517 to 526 (SSSIFGSAPG). The segment at 517 to 560 (SSSIFGSAPGQGATPAFGNSQPSTLFNSTPSTGQTGSAFGQTGS) is disordered. The span at 533–560 (FGNSQPSTLFNSTPSTGQTGSAFGQTGS) shows a compositional bias: polar residues. The disordered stretch occupies residues 734 to 860 (KYRPGENGPK…KERPYKTLSG (127 aa)). Positions 782–793 (SRDKSILPKEQR) are enriched in basic and acidic residues. The segment covering 831-846 (TSVNANQKPNGTTRSD) has biased composition (polar residues). Residues 885 to 1027 (QSDYFTEPRI…GEWKFRVEHF (143 aa)) enclose the Peptidase S59 domain.

It belongs to the nucleoporin GLFG family. In terms of assembly, part of the nuclear pore complex (NPC). The NPC has an eight-fold symmetrical structure comprising a central transport channel and two rings, the cytoplasmic and nuclear rings, to which eight filaments are attached. The cytoplasmic filaments have loose ends, while the nuclear filaments are joined in a distal ring, forming a nuclear basket. NPCs are highly dynamic in configuration and composition, and can be devided in 3 subcomplexes, the NUP62 subcomplex, the NUP107-160 subcomplex and the NUP93 subcomplex, containing approximately 30 different nucleoporin proteins.

It localises to the nucleus. Its subcellular location is the nuclear pore complex. This is Nuclear pore complex protein NUP98A from Arabidopsis thaliana (Mouse-ear cress).